A 62-amino-acid chain; its full sequence is MAKTIIVKQVRSAARRPAVQTAVLKGLGLNKMHRTRELEDTPSIRGMVAKIPHLVEIIEERG.

It belongs to the universal ribosomal protein uL30 family. In terms of assembly, part of the 50S ribosomal subunit.

The polypeptide is Large ribosomal subunit protein uL30 (Cereibacter sphaeroides (strain ATCC 17029 / ATH 2.4.9) (Rhodobacter sphaeroides)).